The primary structure comprises 156 residues: B3 domain-containing protein At5g26805 (156 aa).

The segment at residues 57 to 155 (KFQLPMEKIR…MFCFSVLDGR (99 aa)) is a DNA-binding region (TF-B3).

The protein localises to the nucleus. The sequence is that of B3 domain-containing protein At5g26805 from Arabidopsis thaliana (Mouse-ear cress).